A 1589-amino-acid chain; its full sequence is Mediator of RNA polymerase II transcription subunit 23 (1589 aa).

A disordered region spans residues 1381–1499 (YVSQNEPAPP…PPTPAPMHHQ (119 aa)). Residues 1392–1410 (TPEREKTPERKDQQKEQQE) are compositionally biased toward basic and acidic residues. Positions 1457 to 1470 (LHHQQQQQQHLSQM) are enriched in low complexity.

The protein belongs to the Mediator complex subunit 23 family. In terms of assembly, component of the Mediator complex.

The protein localises to the nucleus. Functionally, component of the Mediator complex, a coactivator involved in the regulated transcription of nearly all RNA polymerase II-dependent genes. Mediator functions as a bridge to convey information from gene-specific regulatory proteins to the basal RNA polymerase II transcription machinery. Mediator is recruited to promoters by direct interactions with regulatory proteins and serves as a scaffold for the assembly of a functional preinitiation complex with RNA polymerase II and the general transcription factors. This is Mediator of RNA polymerase II transcription subunit 23 (sur-2) from Caenorhabditis briggsae.